We begin with the raw amino-acid sequence, 239 residues long: Probable intron-encoded endonuclease I-ZbiI (239 aa).

It belongs to the LAGLIDADG endonuclease family.

It is found in the mitochondrion. Endonuclease involved in mitochondrial 21S rRNA gene intron homing. The polypeptide is Probable intron-encoded endonuclease I-ZbiI (Zygosaccharomyces bisporus).